Consider the following 251-residue polypeptide: Mediator of RNA polymerase II transcription subunit 7 (251 aa).

Residues 1 to 38 (MLPGFGAQTVSPFPNPPEYASAYTSDRINNGSAPPPPH) are disordered. A compositionally biased stretch (polar residues) spans 22–32 (AYTSDRINNGS).

Belongs to the Mediator complex subunit 7 family. In terms of assembly, component of the Mediator complex. Interacts with mdt-10 and mdt-21. Interacts with RNA polymerase II.

The protein resides in the nucleus. Its function is as follows. Component of the Mediator complex, a coactivator involved in the regulated transcription of nearly all RNA polymerase II-dependent genes. Mediator functions as a bridge to convey information from gene-specific regulatory proteins to the basal RNA polymerase II transcription machinery. Mediator is recruited to promoters by direct interactions with regulatory proteins and serves as a scaffold for the assembly of a functional preinitiation complex with RNA polymerase II and the general transcription factors. Required for germ cell development and gonadal growth. In Caenorhabditis elegans, this protein is Mediator of RNA polymerase II transcription subunit 7 (let-49).